The chain runs to 202 residues: LexA repressor (202 aa).

The segment at residues 28–48 is a DNA-binding region (H-T-H motif); sequence RAEIAQQLGFRSPNAAEEHLK. Active-site for autocatalytic cleavage activity residues include Ser119 and Lys156.

It belongs to the peptidase S24 family. In terms of assembly, homodimer.

It carries out the reaction Hydrolysis of Ala-|-Gly bond in repressor LexA.. Represses a number of genes involved in the response to DNA damage (SOS response), including recA and lexA. Binds to the 16 bp palindromic sequence 5'-CTGTATATATATACAG-3'. In the presence of single-stranded DNA, RecA interacts with LexA causing an autocatalytic cleavage which disrupts the DNA-binding part of LexA, leading to derepression of the SOS regulon and eventually DNA repair. This is LexA repressor from Pectobacterium carotovorum subsp. carotovorum (Erwinia carotovora subsp. carotovora).